Consider the following 661-residue polypeptide: UvrABC system protein B (661 aa).

The 186-residue stretch at 24–209 folds into the Helicase ATP-binding domain; that stretch reads NGLNKGYRFQ…IFPSYQDEGI (186 aa). 37–44 contributes to the ATP binding site; sequence GVTGSGKT. The Beta-hairpin signature appears at 90–113; that stretch reads YYDYYQPEAYVPTKDLYIEKSADI. The region spanning 430 to 594 is the Helicase C-terminal domain; it reads DLVNEIVQVK…IIKPLMEDIF (165 aa). The UVR domain occupies 622–657; sequence EEYAALLEEEMYKAASELRYEDAARLRDELFKIKEE.

This sequence belongs to the UvrB family. As to quaternary structure, forms a heterotetramer with UvrA during the search for lesions. Interacts with UvrC in an incision complex.

The protein resides in the cytoplasm. The UvrABC repair system catalyzes the recognition and processing of DNA lesions. A damage recognition complex composed of 2 UvrA and 2 UvrB subunits scans DNA for abnormalities. Upon binding of the UvrA(2)B(2) complex to a putative damaged site, the DNA wraps around one UvrB monomer. DNA wrap is dependent on ATP binding by UvrB and probably causes local melting of the DNA helix, facilitating insertion of UvrB beta-hairpin between the DNA strands. Then UvrB probes one DNA strand for the presence of a lesion. If a lesion is found the UvrA subunits dissociate and the UvrB-DNA preincision complex is formed. This complex is subsequently bound by UvrC and the second UvrB is released. If no lesion is found, the DNA wraps around the other UvrB subunit that will check the other stand for damage. The protein is UvrABC system protein B of Fervidobacterium nodosum (strain ATCC 35602 / DSM 5306 / Rt17-B1).